Reading from the N-terminus, the 716-residue chain is uncharacterized protein (716 aa).

Disordered regions lie at residues 84-103 (SPSI…ERYP) and 153-189 (VTDE…SQTQ). The residue at position 97 (serine 97) is a Phosphoserine. Residues lysine 201, lysine 204, lysine 237, lysine 283, and lysine 626 each participate in a glycyl lysine isopeptide (Lys-Gly) (interchain with G-Cter in SUMO2) cross-link.

This is an uncharacterized protein from Homo sapiens (Human).